The following is a 250-amino-acid chain: N-acyl homoserine lactonase (250 aa).

Zn(2+) contacts are provided by His104, His106, Asp108, His109, His169, Asp191, and His235.

Belongs to the metallo-beta-lactamase superfamily. Monomer. Zn(2+) is required as a cofactor.

It catalyses the reaction an N-acyl-L-homoserine lactone + H2O = an N-acyl-L-homoserine + H(+). This chain is N-acyl homoserine lactonase, found in Bacillus cereus.